The following is a 1468-amino-acid chain: Centrosomal protein of 290 kDa (1468 aa).

Coiled-coil stretches lie at residues Glu-1 to Lys-25, Ser-52 to Ala-121, Lys-172 to Ala-292, Val-318 to Lys-528, Arg-559 to Arg-592, His-627 to Asn-688, and Ile-736 to Phe-1441. The tract at residues Thr-1060–Tyr-1468 is self-association (with itself or N-terminus). The tract at residues Leu-1130–Glu-1152 is disordered.

In terms of assembly, part of the tectonic-like complex (also named B9 complex). Interacts with ATF4 via its N-terminal region. Associates with the BBSome complex, interacting (via N-terminus) with BBS4. Interacts with IQCB1/NPHP5; IQCB1 and CEP290/NPHP6 are proposed to form a functional NPHP5-6 module localized to the centrosome. Interacts with NPHP4; the interaction likely requires additional interactors. Interacts with ZNF423, FAM161A, CEP162, CEP162, CEP131, TALPID3, CCDC13, CC2D2A, RPGRIP1. Can self-associate (homo- or heteromeric). Interacts with CCP110; required for suppressing cilia formation. Interacts with RPGR. Associates (via C-terminus) with microtubules; association to microtubule is reduced in response to cellular stress, such as ultraviolet light (UV) radiation or heat shock, in a process that requires p38 MAP kinase signaling. Interacts with FAM161A. Interacts with PCM1. Interacts with CCDC66. Interacts with ARMC9 and CSPP1. Ubiquitinated. May undergo monoubiquitination; monoubiquitination is inhibited in response to cellular stress, such as ultraviolet light (UV) radiation or heat shock, but does not cause its displacement from centriolar satellites.

Its subcellular location is the cytoplasm. It is found in the cytoskeleton. It localises to the microtubule organizing center. The protein localises to the centrosome. The protein resides in the centriolar satellite. Its subcellular location is the nucleus. It is found in the cell projection. It localises to the cilium. The protein localises to the cilium basal body. The protein resides in the centriole. Its subcellular location is the cytoplasmic vesicle. Its function is as follows. Involved in early and late steps in cilia formation. Its association with CCP110 is required for inhibition of primary cilia formation by CCP110. May play a role in early ciliogenesis in the disappearance of centriolar satellites and in the transition of primary ciliar vesicles (PCVs) to capped ciliary vesicles (CCVs). Required for the centrosomal recruitment of RAB8A and for the targeting of centriole satellite proteins to centrosomes such as of PCM1. Required for the correct localization of ciliary and phototransduction proteins in retinal photoreceptor cells; may play a role in ciliary transport processes. Required for efficient recruitment of RAB8A to primary cilium. In the ciliary transition zone is part of the tectonic-like complex which is required for tissue-specific ciliogenesis and may regulate ciliary membrane composition. Involved in regulation of the BBSome complex integrity, specifically for presence of BBS2, BBS5 and BBS8/TTC8 in the complex, and in ciliary targeting of selected BBSome cargos. May play a role in controlling entry of the BBSome complex to cilia possibly implicating IQCB1/NPHP5. Activates ATF4-mediated transcription. This chain is Centrosomal protein of 290 kDa (CEP290), found in Bos taurus (Bovine).